A 520-amino-acid chain; its full sequence is 2-isopropylmalate synthase (520 aa).

Residues 12-274 form the Pyruvate carboxyltransferase domain; sequence IRIFDTTLRD…DSAINTPRIV (263 aa). Asp-21, His-209, His-211, and Asn-245 together coordinate Mn(2+). Residues 396-520 are regulatory domain; sequence RLASMTISDV…VIAGKTAAVA (125 aa).

Belongs to the alpha-IPM synthase/homocitrate synthase family. LeuA type 1 subfamily. As to quaternary structure, homodimer. Mn(2+) is required as a cofactor.

The protein resides in the cytoplasm. The catalysed reaction is 3-methyl-2-oxobutanoate + acetyl-CoA + H2O = (2S)-2-isopropylmalate + CoA + H(+). It participates in amino-acid biosynthesis; L-leucine biosynthesis; L-leucine from 3-methyl-2-oxobutanoate: step 1/4. In terms of biological role, catalyzes the condensation of the acetyl group of acetyl-CoA with 3-methyl-2-oxobutanoate (2-ketoisovalerate) to form 3-carboxy-3-hydroxy-4-methylpentanoate (2-isopropylmalate). The chain is 2-isopropylmalate synthase from Xanthomonas oryzae pv. oryzae (strain MAFF 311018).